We begin with the raw amino-acid sequence, 282 residues long: Parvulin-like PPIase (282 aa).

A signal peptide spans 1–20 (MKKLSVIFLSVSMLSGIAFA). Residues 138–231 (KEQIKVAHIL…FGWHIIKVLE (94 aa)) enclose the PpiC domain.

It belongs to the PpiC/parvulin rotamase family.

Its subcellular location is the cell outer membrane. It catalyses the reaction [protein]-peptidylproline (omega=180) = [protein]-peptidylproline (omega=0). This Rickettsia felis (strain ATCC VR-1525 / URRWXCal2) (Rickettsia azadi) protein is Parvulin-like PPIase (plp).